The primary structure comprises 185 residues: Small ribosomal subunit protein uS5 (185 aa).

An S5 DRBM domain is found at 18–81 (FVDKLVHINR…ESAKRALIRV (64 aa)). The interval 157–185 (SPRSVAARRGIKVSQLQSRRRVEDAEATD) is disordered. The segment covering 176–185 (RRVEDAEATD) has biased composition (basic and acidic residues).

The protein belongs to the universal ribosomal protein uS5 family. As to quaternary structure, part of the 30S ribosomal subunit. Contacts proteins S4 and S8.

With S4 and S12 plays an important role in translational accuracy. Its function is as follows. Located at the back of the 30S subunit body where it stabilizes the conformation of the head with respect to the body. The protein is Small ribosomal subunit protein uS5 of Xanthobacter autotrophicus (strain ATCC BAA-1158 / Py2).